The sequence spans 110 residues: uncharacterized protein (110 aa).

This sequence to M.jannaschii MJ0123 and A.aeolicus AA15.

This is an uncharacterized protein from Methanocaldococcus jannaschii (strain ATCC 43067 / DSM 2661 / JAL-1 / JCM 10045 / NBRC 100440) (Methanococcus jannaschii).